The primary structure comprises 125 residues: Interleukin-6 (125 aa).

A disulfide bridge connects residues C16 and C26.

This sequence belongs to the IL-6 superfamily. As to quaternary structure, component of a hexamer of two molecules each of IL6, IL6R and IL6ST; first binds to IL6R to associate with the signaling subunit IL6ST. Interacts with IL6R (via the N-terminal ectodomain); this interaction may be affected by IL6R-binding with SORL1, hence decreasing IL6 cis signaling. Interacts with SORL1 (via the N-terminal ectodomain); this interaction leads to IL6 internalization and lysosomal degradation. May form a trimeric complex with the soluble SORL1 ectodomain and soluble IL6R receptor; this interaction might stabilize circulating IL6, hence promoting IL6 trans signaling.

It localises to the secreted. Functionally, cytokine with a wide variety of biological functions in immunity, tissue regeneration, and metabolism. Binds to IL6R, then the complex associates to the signaling subunit IL6ST/gp130 to trigger the intracellular IL6-signaling pathway. The interaction with the membrane-bound IL6R and IL6ST stimulates 'classic signaling', whereas the binding of IL6 and soluble IL6R to IL6ST stimulates 'trans-signaling'. Alternatively, 'cluster signaling' occurs when membrane-bound IL6:IL6R complexes on transmitter cells activate IL6ST receptors on neighboring receiver cells. IL6 is a potent inducer of the acute phase response. Rapid production of IL6 contributes to host defense during infection and tissue injury, but excessive IL6 synthesis is involved in disease pathology. In the innate immune response, is synthesized by myeloid cells, such as macrophages and dendritic cells, upon recognition of pathogens through toll-like receptors (TLRs) at the site of infection or tissue injury. In the adaptive immune response, is required for the differentiation of B cells into immunoglobulin-secreting cells. Plays a major role in the differentiation of CD4(+) T cell subsets. Essential factor for the development of T follicular helper (Tfh) cells that are required for the induction of germinal-center formation. Required to drive naive CD4(+) T cells to the Th17 lineage. Also required for proliferation of myeloma cells and the survival of plasmablast cells. Its function is as follows. Acts as an essential factor in bone homeostasis and on vessels directly or indirectly by induction of VEGF, resulting in increased angiogenesis activity and vascular permeability. Induces, through 'trans-signaling' and synergistically with IL1B and TNF, the production of VEGF. Involved in metabolic controls, is discharged into the bloodstream after muscle contraction increasing lipolysis and improving insulin resistance. 'Trans-signaling' in central nervous system also regulates energy and glucose homeostasis. Mediates, through GLP-1, crosstalk between insulin-sensitive tissues, intestinal L cells and pancreatic islets to adapt to changes in insulin demand. Also acts as a myokine. Plays a protective role during liver injury, being required for maintenance of tissue regeneration. Also has a pivotal role in iron metabolism by regulating HAMP/hepcidin expression upon inflammation or bacterial infection. Through activation of IL6ST-YAP-NOTCH pathway, induces inflammation-induced epithelial regeneration. The protein is Interleukin-6 (IL6) of Neovison vison (American mink).